Consider the following 84-residue polypeptide: Molybdopterin synthase sulfur carrier subunit (84 aa).

G84 is subject to 1-thioglycine; alternate. Position 84 is a glycyl adenylate; alternate (G84).

The protein belongs to the MoaD family. MOCS2A subfamily. In terms of assembly, heterotetramer; composed of 2 small (MOCS2A) and 2 large (MOCS2B) subunits. Post-translationally, C-terminal thiocarboxylation occurs in 2 steps, it is first acyl-adenylated (-COAMP) via the hesA/moeB/thiF part of MOCS3, then thiocarboxylated (-COSH) via the rhodanese domain of MOCS3.

It is found in the cytoplasm. It participates in cofactor biosynthesis; molybdopterin biosynthesis. Acts as a sulfur carrier required for molybdopterin biosynthesis. Component of the molybdopterin synthase complex that catalyzes the conversion of precursor Z into molybdopterin by mediating the incorporation of 2 sulfur atoms into precursor Z to generate a dithiolene group. In the complex, serves as sulfur donor by being thiocarboxylated (-COSH) at its C-terminus by MOCS3. After interaction with MOCS2B, the sulfur is then transferred to precursor Z to form molybdopterin. The protein is Molybdopterin synthase sulfur carrier subunit of Caenorhabditis briggsae.